Reading from the N-terminus, the 128-residue chain is MVYELKSPLLGFEEIKEFDLVEVDEMFAKIKAINNPSIEITLANPYALREYSFDIPAYIQALLDINAQSKVRVFCTVVIQNPIDESRVNFLAPLIFNDDNQTAAQIALSIKDYPDFSVADKIKNYVKE.

Belongs to the FliW family. In terms of assembly, interacts with translational regulator CsrA and flagellin(s).

The protein localises to the cytoplasm. In terms of biological role, acts as an anti-CsrA protein, binds CsrA and prevents it from repressing translation of its target genes, one of which is flagellin. Binds to flagellin and participates in the assembly of the flagellum. This is Flagellar assembly factor FliW 1 from Wolinella succinogenes (strain ATCC 29543 / DSM 1740 / CCUG 13145 / JCM 31913 / LMG 7466 / NCTC 11488 / FDC 602W) (Vibrio succinogenes).